The chain runs to 321 residues: Beta-porphyranase B (321 aa).

The signal sequence occupies residues 1–20; it reads MRKTVLYLSAASLFLSSYTL. Residues 31–319 enclose the GH16 domain; it reads EHIKNLPEAP…WVRAYKLVPI (289 aa). Residues tryptophan 72, arginine 76, glutamate 173, glutamate 178, and glutamate 284 each contribute to the substrate site. Glutamate 173 acts as the Nucleophile in catalysis. Glutamate 178 (proton donor) is an active-site residue.

It belongs to the glycosyl hydrolase 16 family.

The enzyme catalyses Hydrolysis of beta-D-galactopyranose-(1-&gt;4)-alpha-L-galactopyranose-6-sulfate linkages in porphyran.. Its function is as follows. Cleaves the sulfated polysaccharide porphyran at the (1-&gt;4) linkages between beta-D-galactopyranose and alpha-L-galactopyranose-6-sulfate, forming mostly the disaccharide alpha-L-galactopyranose-6-sulfate-(1-&gt;3)-beta-D-galactose. Some longer oligosaccharides of even number of residues are also observed. Inactive on the non-sulfated agarose portion of the porphyran backbone. This is Beta-porphyranase B from Phocaeicola plebeius (strain DSM 17135 / JCM 12973 / CCUG 54634 / M2) (Bacteroides plebeius).